The chain runs to 423 residues: CinA-like protein (423 aa).

Belongs to the CinA family.

This is CinA-like protein from Prochlorococcus marinus (strain SARG / CCMP1375 / SS120).